The sequence spans 845 residues: Poly(A) RNA polymerase gld-4 (845 aa).

A disordered region spans residues 1–55 (MNEDSRLSSSQQPSTSTPRSSIPSTMNSDEPNTCRRLSQSQEQPSTSRTCKSETP). The span at 7-25 (LSSSQQPSTSTPRSSIPST) shows a compositional bias: low complexity. The segment covering 26–49 (MNSDEPNTCRRLSQSQEQPSTSRT) has biased composition (polar residues). 2 residues coordinate Mg(2+): Asp-139 and Asp-141. In terms of domain architecture, PAP-associated spans 276–335 (NLGHLLLRFLELYSLEFNFEEMGISPGQCCYIPKSASGARYGHKQAQPGNLALEDPLLTA). Positions 482–506 (KSLEKMPACDDNKKEEELVATRETD) are enriched in basic and acidic residues. 2 disordered regions span residues 482-733 (KSLE…SEEP) and 788-845 (NALT…RLQR). Residues 535 to 551 (TSTQSVNTSATVSTAAS) show a composition bias toward low complexity. Polar residues-rich tracts occupy residues 561 to 571 (PGLSSSMGNQS) and 579 to 588 (GINNRNNSAV). The span at 605-620 (RESKRTQTTSEDKMQD) shows a compositional bias: basic and acidic residues. Residues 643 to 653 (SHKHRNAHPQR) are compositionally biased toward basic residues. 4 stretches are compositionally biased toward polar residues: residues 654-666 (QRPS…QGSD), 695-732 (RQQT…SSEE), 788-805 (NALT…TSMQ), and 819-828 (DNNSATSSTD).

As to quaternary structure, interacts with gls-1 isoform C. Requires Mg(2+) as cofactor. The cofactor is Mn(2+). Germline-specific.

The protein localises to the cytoplasm. Its subcellular location is the cytoplasmic granule. The protein resides in the perinuclear region. It catalyses the reaction RNA(n) + ATP = RNA(n)-3'-adenine ribonucleotide + diphosphate. In terms of biological role, cytoplasmic poly(A) RNA polymerase that adds successive AMP monomers to the 3'-end of specific RNAs, forming a poly(A) tail. The enzymatic activity is enhanced by its interaction with gls-1. Required, together with gld-2, for early meiotic progression in male and female germ cells and for gld-1 protein accumulation in the hermaphrodite germline. In the germline, forms a complex with gls-1 which directly binds to gld-1 mRNA and prevents its degradation. In Caenorhabditis elegans, this protein is Poly(A) RNA polymerase gld-4.